The sequence spans 411 residues: Corticotropin-releasing factor receptor 2 (411 aa).

Positions 1–19 (MDAALLLSLLEANCSLALA) form a signal peptide, not cleaved. The Extracellular segment spans residues 1-108 (MDAALLLSLL…EPILDDKQRK (108 aa)). N13, N41, N74, N86, and N94 each carry an N-linked (GlcNAc...) asparagine glycan. Intrachain disulfides connect C14-C50, C40-C83, and C64-C98. A helical transmembrane segment spans residues 109-139 (YDLHYRIALIINYLGHCVSVVALVAAFLLFL). Topologically, residues 140–146 (VLRSIRC) are cytoplasmic. Residues 147 to 171 (LRNVIHWNLITTFILRNITWFLLQL) form a helical membrane-spanning segment. Over 172 to 185 (IDHEVHEGNEVWCR) the chain is Extracellular. A disulfide bridge links C184 with C254. The helical transmembrane segment at 186-214 (CVTTIFNYFVVTNFFWMFVEGCYLHTAIV) threads the bilayer. At 215 to 221 (MTYSTEH) the chain is on the cytoplasmic side. A helical membrane pass occupies residues 222–249 (LRKWLFLFIGWCIPCPIIVAWAVGKLYY). At 250-265 (ENEQCWFGKEPGDLVD) the chain is on the extracellular side. Residues 266-291 (YIYQGPIILVLLINFVFLFNIVRILM) traverse the membrane as a helical segment. Over 292-302 (TKLRASTTSET) the chain is Cytoplasmic. A helical membrane pass occupies residues 303-327 (IQYRKAVKATLVLLPLLGITYMLFF). The Extracellular segment spans residues 328–334 (VNPGEDD). A helical transmembrane segment spans residues 335 to 364 (LSQIVFIYFNSFLQSFQGFFVSVFYCFFNG). At 365–411 (EVRSALRKRWHRWQDHHALRVPVARAMSIPTSPTRISFHSIKQTAAV) the chain is on the cytoplasmic side.

Belongs to the G-protein coupled receptor 2 family. As to quaternary structure, monomer. Interacts (via N-terminal extracellular domain) with CRF, UCN, UCN2 and UCN3. In terms of processing, a N-glycosylation site within the signal peptide impedes its proper cleavage and function. As to expression, predominantly expressed in limbic regions of the brain such as the lateral septum, the entorhinal cortex, the hypothalamic ventromedial nucleus and several amygdaloid nuclei. Also detectable in lung, kidney and heart.

Its subcellular location is the cell membrane. G-protein coupled receptor for CRH (corticotropin-releasing factor), UCN (urocortin), UCN2 and UCN3. Has high affinity for UCN. Ligand binding causes a conformation change that triggers signaling via guanine nucleotide-binding proteins (G proteins) and down-stream effectors, such as adenylate cyclase. Promotes the activation of adenylate cyclase, leading to increased intracellular cAMP levels. This chain is Corticotropin-releasing factor receptor 2 (Crhr2), found in Rattus norvegicus (Rat).